The chain runs to 50 residues: Sperm protamine P1 (50 aa).

Cystine bridges form between Cys-7–Cys-15 and Cys-38–Cys-46.

The protein belongs to the protamine P1 family. In terms of assembly, cross-linked by interchain disulfide bonds around the DNA-helix. In terms of tissue distribution, testis.

The protein resides in the nucleus. The protein localises to the chromosome. In terms of biological role, protamines substitute for histones in the chromatin of sperm during the haploid phase of spermatogenesis. They compact sperm DNA into a highly condensed, stable and inactive complex. This Equus caballus (Horse) protein is Sperm protamine P1 (PRM1).